The sequence spans 280 residues: Biotin carboxyl carrier protein of acetyl-CoA carboxylase 1, chloroplastic (280 aa).

A chloroplast-targeting transit peptide spans 1–82; the sequence is MASSSFSVTS…SNAAKVDGPS (82 aa). Residues 52–75 are compositionally biased toward polar residues; that stretch reads PSRSSYPVVKAQSNKVSTGASSNA. 2 disordered regions span residues 52–106 and 164–215; these read PSRS…ATEE and QPSY…GTFY. A compositionally biased stretch (low complexity) spans 177 to 188; it reads PAAAAPAPSTPA. The segment covering 189 to 198 has biased composition (pro residues); it reads SLPPPSPPTP. Positions 203-279 constitute a Biotinyl-binding domain; sequence LPTVKSPMAG…SLDTPLFVVQ (77 aa). The residue at position 245 (Lys-245) is an N6-biotinyllysine.

In terms of assembly, acetyl-CoA carboxylase is a heterohexamer composed of biotin carboxyl carrier protein, biotin carboxylase and 2 subunits each of ACCase subunit alpha and ACCase plastid-coded subunit beta (accD). In terms of tissue distribution, present in developing tissues from roots, leaves, flowers, siliques and seeds (at protein level).

The protein localises to the plastid. It is found in the chloroplast. The protein operates within lipid metabolism; fatty acid biosynthesis. This protein is a component of the acetyl coenzyme A carboxylase complex; first, biotin carboxylase catalyzes the carboxylation of the carrier protein and then the transcarboxylase transfers the carboxyl group to form malonyl-CoA. This Arabidopsis thaliana (Mouse-ear cress) protein is Biotin carboxyl carrier protein of acetyl-CoA carboxylase 1, chloroplastic (BCCP1).